Reading from the N-terminus, the 382-residue chain is Elloramycin glycosyltransferase ElmGT (382 aa).

Belongs to the glycosyltransferase 28 family.

The enzyme catalyses 8-demethyltetracenomycin C + dTDP-beta-L-rhamnose = 8-demethyl-8-alpha-L-rhamnosyl-tetracenomycin C + dTDP + H(+). It participates in antibiotic biosynthesis. Its function is as follows. Glycosyltransferase that transfers an L-rhamnose moiety from dTDP-L-rhamnose to the elloramycin aglycone 8-demethyl-tetracenomycin C (8DMTC) in elloramycin biosynthesis, an antitumor polyketide. Possesses donor substrate flexibility: able to transfer at least 11 different sugars to 8DMTC, such as NDP-D-glucose, as well as NDP-L-digitoxose, including both L- and D-isomeric forms of some sugars. The protein is Elloramycin glycosyltransferase ElmGT of Streptomyces olivaceus.